Consider the following 235-residue polypeptide: Ribonuclease 3 (235 aa).

The RNase III domain occupies 7 to 135 (FAALEARLGH…VVAAVYLDGG (129 aa)). E48 is a binding site for Mg(2+). Residue D52 is part of the active site. Positions 121 and 124 each coordinate Mg(2+). E124 is an active-site residue. One can recognise a DRBM domain in the interval 160–229 (DPKTVLQEWA…ASAFLAREGV (70 aa)).

This sequence belongs to the ribonuclease III family. As to quaternary structure, homodimer. The cofactor is Mg(2+).

The protein localises to the cytoplasm. The enzyme catalyses Endonucleolytic cleavage to 5'-phosphomonoester.. Its function is as follows. Digests double-stranded RNA. Involved in the processing of primary rRNA transcript to yield the immediate precursors to the large and small rRNAs (23S and 16S). Processes some mRNAs, and tRNAs when they are encoded in the rRNA operon. Processes pre-crRNA and tracrRNA of type II CRISPR loci if present in the organism. The chain is Ribonuclease 3 from Azorhizobium caulinodans (strain ATCC 43989 / DSM 5975 / JCM 20966 / LMG 6465 / NBRC 14845 / NCIMB 13405 / ORS 571).